The primary structure comprises 206 residues: Ribosomal RNA small subunit methyltransferase G (206 aa).

S-adenosyl-L-methionine-binding positions include glycine 74, leucine 79, 125-126, and arginine 140; that span reads VE.

This sequence belongs to the methyltransferase superfamily. RNA methyltransferase RsmG family.

Its subcellular location is the cytoplasm. It carries out the reaction guanosine(527) in 16S rRNA + S-adenosyl-L-methionine = N(7)-methylguanosine(527) in 16S rRNA + S-adenosyl-L-homocysteine. Its function is as follows. Specifically methylates the N7 position of guanine in position 527 of 16S rRNA. This chain is Ribosomal RNA small subunit methyltransferase G, found in Shewanella sp. (strain MR-7).